A 105-amino-acid polypeptide reads, in one-letter code: Cell division protein FtsL (105 aa).

The Cytoplasmic segment spans residues M1–K22. A helical transmembrane segment spans residues I23–H43. Residues R44–K105 are Periplasmic-facing.

Belongs to the FtsL family. Part of a complex composed of FtsB, FtsL and FtsQ.

It is found in the cell inner membrane. Its function is as follows. Essential cell division protein. May link together the upstream cell division proteins, which are predominantly cytoplasmic, with the downstream cell division proteins, which are predominantly periplasmic. The polypeptide is Cell division protein FtsL (Yersinia pestis).